Here is a 613-residue protein sequence, read N- to C-terminus: MATIPDWKLQLLARRRQEEASVRGREKAERERLSQMPAWKRGLLERRRAKLGLSPGEPSPVLGTVEAGPPDPDESAVLLEAIGPVHQNRFIRQERQQQQQQQQRSEELLAERKPGPLEARERRPSPGEMRDQSPKGRESREERLSPRETRERRLGIGGAQELSLRPLEARDWRQSPGEVGDRSSRLSEAWKWRLSPGETPERSLRLAESREQSPRRKEVESRLSPGESAYQKLGLTEAHKWRPDSRESQEQSLVQLEATEWRLRSGEERQDYSEECGRKEEWPVPGVAPKETAELSETLTREAQGNSSAGVEAAEQRPVEDGERGMKPTEGWKWTLNSGKAREWTPRDIEAQTQKPEPPESAEKLLESPGVEAGEGEAEKEEAGAQGRPLRALQNCCSVPSPLPPEDAGTGGLRQQEEEAVELQPPPPAPLSPPPPAPTAPQPPGDPLMSRLFYGVKAGPGVGAPRRSGHTFTVNPRRSVPPATPATPTSPATVDAAVPGAGKKRYPTAEEILVLGGYLRLSRSCLAKGSPERHHKQLKISFSETALETTYQYPSESSVLEELGPEPEVPSAPNPPAAQPDDEEDEEELLLLQPELQGGLRTKALIVDESCRR.

Basic and acidic residues predominate over residues 18-33; the sequence is EEASVRGREKAERERL. 2 disordered regions span residues 18 to 231 and 266 to 500; these read EEAS…SAYQ and GEER…AVPG. Phosphoserine is present on residues Ser54, Ser125, Ser133, Ser175, and Ser195. Basic and acidic residues-rich tracts occupy residues 104 to 154 and 167 to 191; these read RSEE…ERRL and LEAR…EAWK. Thr199 carries the post-translational modification Phosphothreonine. The segment covering 199–221 has biased composition (basic and acidic residues); the sequence is TPERSLRLAESREQSPRRKEVES. Ser224 is subject to Phosphoserine. The span at 266–282 shows a compositional bias: basic and acidic residues; the sequence is GEERQDYSEECGRKEEW. Positions 295-309 are enriched in polar residues; the sequence is LSETLTREAQGNSSA. 3 stretches are compositionally biased toward basic and acidic residues: residues 314–327, 340–350, and 357–366; these read AEQR…RGMK, KAREWTPRDIE, and EPPESAEKLL. 2 positions are modified to phosphoserine: Ser368 and Ser432. Pro residues predominate over residues 424-446; it reads QPPPPAPLSPPPPAPTAPQPPGD. Lys457 is subject to N6-acetyllysine. The span at 476-499 shows a compositional bias: low complexity; the sequence is PRRSVPPATPATPTSPATVDAAVP. Phosphoserine is present on residues Ser490 and Ser530. The tract at residues 552 to 595 is disordered; the sequence is QYPSESSVLEELGPEPEVPSAPNPPAAQPDDEEDEEELLLLQPE. The span at 567–578 shows a compositional bias: pro residues; the sequence is PEVPSAPNPPAA. Residues 580–589 are compositionally biased toward acidic residues; that stretch reads PDDEEDEEEL.

As to quaternary structure, interacts with Protein phosphatase 1 (PP1). As to expression, isoform 4 is predominantly expressed in leukocytes and spleen.

The protein localises to the cytoplasm. The protein resides in the cytoskeleton. In terms of biological role, may target protein phosphatase 1 to F-actin cytoskeleton. This chain is Phostensin (PPP1R18), found in Homo sapiens (Human).